Consider the following 143-residue polypeptide: MELNTITPGQGAKHAKRRVGRGIGSGLGKTAGRGHKGQKSRSGGYHKVGFEGGQMPMQRRLPKRGFKSHLLKFNAEVTLTALEQLGLAEVDLLTLKQSGLVGQIAKNVKIINTGSLSLAVKLTGISATAGAKTIIEAAGGSIA.

The disordered stretch occupies residues Met-1–Arg-59. The segment covering Arg-21–Ala-31 has biased composition (gly residues).

Belongs to the universal ribosomal protein uL15 family. Part of the 50S ribosomal subunit.

Its function is as follows. Binds to the 23S rRNA. The polypeptide is Large ribosomal subunit protein uL15 (Polaromonas naphthalenivorans (strain CJ2)).